The sequence spans 95 residues: UPF0298 protein LVIS_1401 (95 aa).

It belongs to the UPF0298 family.

It is found in the cytoplasm. This chain is UPF0298 protein LVIS_1401, found in Levilactobacillus brevis (strain ATCC 367 / BCRC 12310 / CIP 105137 / JCM 1170 / LMG 11437 / NCIMB 947 / NCTC 947) (Lactobacillus brevis).